The primary structure comprises 51 residues: Large ribosomal subunit protein eL39 (51 aa).

This sequence belongs to the eukaryotic ribosomal protein eL39 family.

The sequence is that of Large ribosomal subunit protein eL39 from Thermococcus gammatolerans (strain DSM 15229 / JCM 11827 / EJ3).